The primary structure comprises 513 residues: uncharacterized protein (513 aa).

Disordered stretches follow at residues 72–113 (GVVP…TGQF) and 155–262 (IMGG…NPRF). Residues 82–106 (ANRTANPNTNSNPNPNATNAQPNPT) show a composition bias toward low complexity. Composition is skewed to polar residues over residues 164–189 (EANS…QTQG) and 210–228 (TPLN…EFQQ). Positions 229–238 (TTSPIFSSSS) are enriched in low complexity. Residues 239 to 248 (TPPPPPPRPS) show a composition bias toward pro residues. A compositionally biased stretch (polar residues) spans 253–262 (GESQNTNPRF). The RING-type; atypical zinc finger occupies 396–437 (CTICMEMFKINDDVIQLPCKHYFHENCIKPWLRVNGTCAICR). A disordered region spans residues 439-513 (PVDPNSQQRN…DDFVDEEPLE (75 aa)). Polar residues predominate over residues 442-493 (PNSQQRNNTSTDSANGHNPSNHANPSTSTTNDQGATLRNESFNAASQSNLSS).

This is an uncharacterized protein from Schizosaccharomyces pombe (strain 972 / ATCC 24843) (Fission yeast).